The following is a 628-amino-acid chain: DNA mismatch repair protein MutL (628 aa).

Residues 334–367 (SDFAQPSADNMPKPESPGAPAAHGRKDDAPAAHA) are disordered. A compositionally biased stretch (basic and acidic residues) spans 357 to 367 (GRKDDAPAAHA).

Belongs to the DNA mismatch repair MutL/HexB family.

Its function is as follows. This protein is involved in the repair of mismatches in DNA. It is required for dam-dependent methyl-directed DNA mismatch repair. May act as a 'molecular matchmaker', a protein that promotes the formation of a stable complex between two or more DNA-binding proteins in an ATP-dependent manner without itself being part of a final effector complex. In Opitutus terrae (strain DSM 11246 / JCM 15787 / PB90-1), this protein is DNA mismatch repair protein MutL.